A 504-amino-acid chain; its full sequence is MSKKALLMILDGWGLGDHGKDDVIFNTATPYWDYLMETYPHSQLQASGENVGLPDGQMGNSEVGHLNIGAGRVVYQDLVKINLSCRDNSILKNPEIVSAFSYAKENGKNVHFMGLTSDGGVHSSLDHLFKLCDIAKEYNIENTFVHCFMDGRDTDPKSGKGFIEQLEAHCAKSAGKVASIIGRYYAMDRDKRWERVKEAYDLLVNGIGKKATDMVQAMQESYDEGVTDEFIKPIVNAGVDGTIKEGDVVIFFNYRNDRAKELTVVLTQQDMPEAGMHTIPGLQYYCMTPYDASFKGVHILFDKENVVNTLGEYLAANGKKQLHIAETEKYAHVTFFFNGGRETPYDNEDRILVPSPKVATYDLKPEMSAYEVKDKLVAAINENKYDFIVVNYANGDMVGHTGIYEAIEKAVVAVDACVKDTIEAAKAQGYEAIIIADHGNADHALNEDGTPNTAHSLNPVPCVYVTENKEAKVADGRLADVAPTILHILDMVQPAEMTGCNLIK.

Asp11 and Ser61 together coordinate Mn(2+). Ser61 (phosphoserine intermediate) is an active-site residue. Substrate-binding positions include His122, 152–153 (RD), Arg183, Arg189, 255–258 (RNDR), and Lys329. Mn(2+)-binding residues include Asp396, His400, Asp437, His438, and His455.

The protein belongs to the BPG-independent phosphoglycerate mutase family. In terms of assembly, monomer. The cofactor is Mn(2+).

The catalysed reaction is (2R)-2-phosphoglycerate = (2R)-3-phosphoglycerate. Its pathway is carbohydrate degradation; glycolysis; pyruvate from D-glyceraldehyde 3-phosphate: step 3/5. Its function is as follows. Catalyzes the interconversion of 2-phosphoglycerate and 3-phosphoglycerate. The sequence is that of 2,3-bisphosphoglycerate-independent phosphoglycerate mutase from Bacteroides fragilis (strain ATCC 25285 / DSM 2151 / CCUG 4856 / JCM 11019 / LMG 10263 / NCTC 9343 / Onslow / VPI 2553 / EN-2).